The following is a 174-amino-acid chain: Shikimate kinase (174 aa).

14–19 contacts ATP; the sequence is GAGKST. Ser-18 contributes to the Mg(2+) binding site. Positions 36, 60, and 82 each coordinate substrate. ATP is bound at residue Arg-120. Arg-141 is a substrate binding site. Arg-158 serves as a coordination point for ATP.

The protein belongs to the shikimate kinase family. As to quaternary structure, monomer. Mg(2+) serves as cofactor.

The protein resides in the cytoplasm. The enzyme catalyses shikimate + ATP = 3-phosphoshikimate + ADP + H(+). It functions in the pathway metabolic intermediate biosynthesis; chorismate biosynthesis; chorismate from D-erythrose 4-phosphate and phosphoenolpyruvate: step 5/7. Its function is as follows. Catalyzes the specific phosphorylation of the 3-hydroxyl group of shikimic acid using ATP as a cosubstrate. The sequence is that of Shikimate kinase from Buchnera aphidicola subsp. Baizongia pistaciae (strain Bp).